The sequence spans 210 residues: Thymidylate kinase (210 aa).

10-17 (GPEGAGKS) is an ATP binding site.

Belongs to the thymidylate kinase family.

The catalysed reaction is dTMP + ATP = dTDP + ADP. In terms of biological role, phosphorylation of dTMP to form dTDP in both de novo and salvage pathways of dTTP synthesis. This is Thymidylate kinase from Pseudomonas savastanoi pv. phaseolicola (strain 1448A / Race 6) (Pseudomonas syringae pv. phaseolicola (strain 1448A / Race 6)).